The sequence spans 326 residues: MDLTAIYESLLSLSPDVPVPSDHGGTESSPGWGSSGPWSLSPSDSSPSGVTSRLPGRSTSLVEGRSCGWVPPPPGFAPLAPRLGPELSPSPTSPTATSTTPSRYKTELCRTFSESGRCRYGAKCQFAHGLGELRQANRHPKYKTELCHKFYLQGRCPYGSRCHFIHNPSEDLAAPGHPPVLRQSISFSGLPSGRRTSPPPPGLAGPSLSSSSFSPSSSPPPPGDLPLSPSAFSAAPGTPLARRDPTPVCCPSCRRATPISVWGPLGGLVRTPSVQSLGSDPDEYASSGSSLGGSDSPVFEAGVFAPPQPVAAPRRLPIFNRISVSE.

Residues 1 to 15 (MDLTAIYESLLSLSP) form a necessary for nuclear export region. Residues 1–100 (MDLTAIYESL…PTSPTATSTT (100 aa)) are necessary and sufficient for the association with mRNA decay enzymes and mRNA decay activation. Necessary for localization of ARE-containing mRNAs to processing bodies (PBs) stretches follow at residues 1-174 (MDLT…DLAA) and 100-326 (TPSR…SVSE). A disordered region spans residues 13–66 (LSPDVPVPSDHGGTESSPGWGSSGPWSLSPSDSSPSGVTSRLPGRSTSLVEGRS). A compositionally biased stretch (low complexity) spans 28–49 (SSPGWGSSGPWSLSPSDSSPSG). Ser60 bears the Phosphoserine; by MAPKAPK2 mark. Ser66 is subject to Phosphoserine. Residues 71–75 (PPPPG) form a P-P-P-P-G repeat. Residues 78–102 (PLAPRLGPELSPSPTSPTATSTTPS) form a disordered region. Ser88 and Ser90 each carry phosphoserine. Thr92 carries the phosphothreonine modification. Ser93 carries the phosphoserine modification. A necessary for nuclear localization region spans residues 95–168 (TATSTTPSRY…GSRCHFIHNP (74 aa)). Positions 97–173 (TSTTPSRYKT…FIHNPSEDLA (77 aa)) are necessary for RNA-binding. 2 C3H1-type zinc fingers span residues 103–131 (RYKT…HGLG) and 141–169 (KYKT…HNPS). The segment at 103–194 (RYKTELCRTF…ISFSGLPSGR (92 aa)) is necessary for interaction with PABPN1. Ser169 bears the Phosphoserine mark. Residues 174-326 (APGHPPVLRQ…PIFNRISVSE (153 aa)) are necessary for mRNA decay activation. 2 disordered regions span residues 175–245 (PGHP…RRDP) and 273–292 (SVQS…SSLG). Phosphoserine; by MAPKAPK2 is present on Ser186. The residue at position 197 (Ser197) is a Phosphoserine. The P-P-P-P-G repeat unit spans residues 198 to 202 (PPPPG). Residues 204–216 (AGPSLSSSSFSPS) show a composition bias toward low complexity. Ser218 carries the phosphoserine modification. A P-P-P-P-G repeat occupies 219 to 223 (PPPPG). At Ser228 the chain carries Phosphoserine; by MAPK1; in vitro. Phosphoserine is present on residues Ser276, Ser296, and Ser323. Positions 312-326 (APRRLPIFNRISVSE) are interaction with CNOT1.

In terms of assembly, associates with cytoplasmic CCR4-NOT and PAN2-PAN3 deadenylase complexes to trigger ARE-containing mRNA deadenylation and decay processes. Part of a mRNA decay activation complex at least composed of poly(A)-specific exoribonucleases CNOT6, EXOSC2 and XRN1 and mRNA-decapping enzymes DCP1A and DCP2. Associates with the RNA exosome complex. Interacts (via phosphorylated form) with 14-3-3 proteins; these interactions promote exclusion of ZFP36 from cytoplasmic stress granules in response to arsenite treatment in a MAPKAPK2-dependent manner and does not prevent CCR4-NOT deadenylase complex recruitment or ZFP36-induced ARE-containing mRNA deadenylation and decay processes. Interacts with 14-3-3 proteins; these interactions occur in response to rapamycin in an Akt-dependent manner. Interacts with AGO2 and AGO4. Interacts (via C-terminus) with CNOT1; this interaction occurs in a RNA-independent manner and induces mRNA deadenylation. Interacts (via N-terminus) with CNOT6. Interacts with CNOT6L. Interacts (via C-terminus) with CNOT7; this interaction occurs in a RNA-independent manner, induces mRNA deadenylation and is inhibited in a phosphorylation MAPKAPK2-dependent manner. Interacts (via unphosphorylated form) with CNOT8; this interaction occurs in a RNA-independent manner and is inhibited in a phosphorylation MAPKAPK2-dependent manner. Interacts with DCP1A. Interacts (via N-terminus) with DCP2. Interacts with EDC3. Interacts (via N-terminus) with EXOSC2. Interacts with heat shock 70 kDa proteins. Interacts with KHSRP; this interaction increases upon cytokine-induced treatment. Interacts with MAP3K4; this interaction enhances the association with SH3KBP1/CIN85. Interacts with MAPKAPK2; this interaction occurs upon skeletal muscle satellite cell activation. Interacts with NCL. Interacts with NUP214; this interaction increases upon lipopolysaccharide (LPS) stimulation. Interacts with PABPC1; this interaction occurs in a RNA-dependent manner. Interacts (via hypophosphorylated form) with PABPN1 (via RRM domain and C-terminal arginine-rich region); this interaction occurs in the nucleus in a RNA-independent manner, decreases in presence of single-stranded poly(A) RNA-oligomer and in a p38 MAPK-dependent-manner and inhibits nuclear poly(A) tail synthesis. Interacts with PAN2. Interacts (via C3H1-type zinc finger domains) with PKM. Interacts (via C3H1-type zinc finger domains) with nuclear RNA poly(A) polymerase. Interacts with PPP2CA; this interaction occurs in LPS-stimulated cells and induces ZFP36 dephosphorylation, and hence may promote ARE-containing mRNAs decay. Interacts (via C-terminus) with PRR5L (via C-terminus); this interaction may accelerate ZFP36-mediated mRNA decay during stress. Interacts (via C-terminus) with SFN; this interaction occurs in a phosphorylation-dependent manner. Interacts (via extreme C-terminal region) with SH3KBP1/CIN85 (via SH3 domains); this interaction enhances MAP3K4-induced phosphorylation of ZFP36 at Ser-66 and Ser-93 and does not alter neither ZFP36 binding to ARE-containing transcripts nor TNF-alpha mRNA decay. Interacts with XRN1. Interacts (via C-terminus and Ser-186 phosphorylated form) with YWHAB; this interaction occurs in a p38/MAPKAPK2-dependent manner, increases cytoplasmic localization of ZFP36 and protects ZFP36 from Ser-186 dephosphorylation by serine/threonine phosphatase 2A, and hence may be crucial for stabilizing ARE-containing mRNAs. Interacts (via phosphorylated form) with YWHAE. Interacts (via C-terminus) with YWHAG; this interaction occurs in a phosphorylation-dependent manner. Interacts with YWHAH; this interaction occurs in a phosphorylation-dependent manner. Interacts with YWHAQ; this interaction occurs in a phosphorylation-dependent manner. Interacts with (via C-terminus) YWHAZ; this interaction occurs in a phosphorylation-dependent manner. Interacts (via P-P-P-P-G repeats) with GIGYF2; the interaction is direct. As to quaternary structure, (Microbial infection) Interacts (via C-terminus) with HTLV-1 TAX (via C-terminus); this interaction inhibits HTLV-1 TAX to transactivate viral long terminal repeat (LTR) promoter. In terms of processing, phosphorylated. Phosphorylation at serine and/or threonine residues occurs in a p38 MAPK- and MAPKAPK2-dependent manner. Phosphorylated by MAPKAPK2 at Ser-60 and Ser-186; phosphorylation increases its stability and cytoplasmic localization, promotes binding to 14-3-3 adapter proteins and inhibits the recruitment of cytoplasmic CCR4-NOT and PAN2-PAN3 deadenylase complexes to the mRNA decay machinery, thereby inhibiting ZFP36-induced ARE-containing mRNA deadenylation and decay processes. Phosphorylation by MAPKAPK2 does not impair ARE-containing RNA-binding. Phosphorylated in a MAPKAPK2- and p38 MAPK-dependent manner upon skeletal muscle satellite cell activation; this phosphorylation inhibits ZFP36-mediated mRNA decay activity, and hence stabilizes MYOD1 mRNA. Phosphorylated by MAPK1 upon mitogen stimulation. Phosphorylated at Ser-66 and Ser-93; these phosphorylations increase in a SH3KBP1-dependent manner. Phosphorylated at serine and threonine residues in a pyruvate kinase PKM- and p38 MAPK-dependent manner. Phosphorylation at Ser-60 may participate in the PKM-mediated degradation of ZFP36 in a p38 MAPK-dependent manner. Dephosphorylated by serine/threonine phosphatase 2A at Ser-186. Ubiquitinated; pyruvate kinase (PKM)-dependent ubiquitination leads to proteasomal degradation through a p38 MAPK signaling pathway. Expressed in both basal and suprabasal epidermal layers. Expressed in epidermal keratinocytes. Expressed strongly in mature dendritic cells. Expressed in immature dendritic cells (at protein level).

It localises to the nucleus. The protein resides in the cytoplasm. Its subcellular location is the cytoplasmic granule. It is found in the P-body. Zinc-finger RNA-binding protein that destabilizes several cytoplasmic AU-rich element (ARE)-containing mRNA transcripts by promoting their poly(A) tail removal or deadenylation, and hence provide a mechanism for attenuating protein synthesis. Acts as an 3'-untranslated region (UTR) ARE mRNA-binding adapter protein to communicate signaling events to the mRNA decay machinery. Recruits deadenylase CNOT7 (and probably the CCR4-NOT complex) via association with CNOT1, and hence promotes ARE-mediated mRNA deadenylation. Functions also by recruiting components of the cytoplasmic RNA decay machinery to the bound ARE-containing mRNAs. Self regulates by destabilizing its own mRNA. Binds to 3'-UTR ARE of numerous mRNAs and of its own mRNA. Plays a role in anti-inflammatory responses; suppresses tumor necrosis factor (TNF)-alpha production by stimulating ARE-mediated TNF-alpha mRNA decay and several other inflammatory ARE-containing mRNAs in interferon (IFN)- and/or lipopolysaccharide (LPS)-induced macrophages. Also plays a role in the regulation of dendritic cell maturation at the post-transcriptional level, and hence operates as part of a negative feedback loop to limit the inflammatory response. Promotes ARE-mediated mRNA decay of hypoxia-inducible factor HIF1A mRNA during the response of endothelial cells to hypoxia. Positively regulates early adipogenesis of preadipocytes by promoting ARE-mediated mRNA decay of immediate early genes (IEGs). Negatively regulates hematopoietic/erythroid cell differentiation by promoting ARE-mediated mRNA decay of the transcription factor STAT5B mRNA. Plays a role in maintaining skeletal muscle satellite cell quiescence by promoting ARE-mediated mRNA decay of the myogenic determination factor MYOD1 mRNA. Associates also with and regulates the expression of non-ARE-containing target mRNAs at the post-transcriptional level, such as MHC class I mRNAs. Participates in association with argonaute RISC catalytic components in the ARE-mediated mRNA decay mechanism; assists microRNA (miRNA) targeting ARE-containing mRNAs. May also play a role in the regulation of cytoplasmic mRNA decapping; enhances decapping of ARE-containing RNAs, in vitro. Involved in the delivery of target ARE-mRNAs to processing bodies (PBs). In addition to its cytosolic mRNA-decay function, affects nuclear pre-mRNA processing. Negatively regulates nuclear poly(A)-binding protein PABPN1-stimulated polyadenylation activity on ARE-containing pre-mRNA during LPS-stimulated macrophages. Also involved in the regulation of stress granule (SG) and P-body (PB) formation and fusion. Plays a role in the regulation of keratinocyte proliferation, differentiation and apoptosis. Plays a role as a tumor suppressor by inhibiting cell proliferation in breast cancer cells. Functionally, (Microbial infection) Negatively regulates HTLV-1 TAX-dependent transactivation of viral long terminal repeat (LTR) promoter. This Homo sapiens (Human) protein is mRNA decay activator protein ZFP36.